The following is a 309-amino-acid chain: Ribosomal RNA small subunit methyltransferase H (309 aa).

S-adenosyl-L-methionine is bound by residues 36–38 (GGH), Asp-56, Phe-82, Asp-103, and Gln-110.

The protein belongs to the methyltransferase superfamily. RsmH family.

Its subcellular location is the cytoplasm. The enzyme catalyses cytidine(1402) in 16S rRNA + S-adenosyl-L-methionine = N(4)-methylcytidine(1402) in 16S rRNA + S-adenosyl-L-homocysteine + H(+). In terms of biological role, specifically methylates the N4 position of cytidine in position 1402 (C1402) of 16S rRNA. The chain is Ribosomal RNA small subunit methyltransferase H from Hahella chejuensis (strain KCTC 2396).